Reading from the N-terminus, the 371-residue chain is Queuine tRNA-ribosyltransferase (371 aa).

Residue aspartate 90 is the Proton acceptor of the active site. Substrate-binding positions include 90 to 94 (DSGGF), aspartate 144, glutamine 189, and glycine 215. Residues 246–252 (GVGTPEN) are RNA binding. Aspartate 265 functions as the Nucleophile in the catalytic mechanism. The interval 270-274 (TRNAR) is RNA binding; important for wobble base 34 recognition. Zn(2+)-binding residues include cysteine 303, cysteine 305, cysteine 308, and histidine 334.

It belongs to the queuine tRNA-ribosyltransferase family. Homodimer. Within each dimer, one monomer is responsible for RNA recognition and catalysis, while the other monomer binds to the replacement base PreQ1. Zn(2+) serves as cofactor.

The enzyme catalyses 7-aminomethyl-7-carbaguanine + guanosine(34) in tRNA = 7-aminomethyl-7-carbaguanosine(34) in tRNA + guanine. Its pathway is tRNA modification; tRNA-queuosine biosynthesis. Functionally, catalyzes the base-exchange of a guanine (G) residue with the queuine precursor 7-aminomethyl-7-deazaguanine (PreQ1) at position 34 (anticodon wobble position) in tRNAs with GU(N) anticodons (tRNA-Asp, -Asn, -His and -Tyr). Catalysis occurs through a double-displacement mechanism. The nucleophile active site attacks the C1' of nucleotide 34 to detach the guanine base from the RNA, forming a covalent enzyme-RNA intermediate. The proton acceptor active site deprotonates the incoming PreQ1, allowing a nucleophilic attack on the C1' of the ribose to form the product. After dissociation, two additional enzymatic reactions on the tRNA convert PreQ1 to queuine (Q), resulting in the hypermodified nucleoside queuosine (7-(((4,5-cis-dihydroxy-2-cyclopenten-1-yl)amino)methyl)-7-deazaguanosine). This chain is Queuine tRNA-ribosyltransferase, found in Helicobacter pylori (strain HPAG1).